Consider the following 102-residue polypeptide: Protein transport protein sec61 subunit beta (102 aa).

Residues M1–A15 show a composition bias toward polar residues. The interval M1–S53 is disordered. At M1–P72 the chain is on the cytoplasmic side. The segment covering G41–G52 has biased composition (low complexity). A helical membrane pass occupies residues V73–A93.

Belongs to the SEC61-beta family. In terms of assembly, heterotrimeric complex composed of SEC61, SBH1 and SSS1.

Its subcellular location is the endoplasmic reticulum membrane. Its function is as follows. Necessary for protein translocation in the endoplasmic reticulum. The protein is Protein transport protein sec61 subunit beta (sbh1) of Schizosaccharomyces pombe (strain 972 / ATCC 24843) (Fission yeast).